Here is a 128-residue protein sequence, read N- to C-terminus: Glycine cleavage system H protein (128 aa).

The 83-residue stretch at 25-107 (TFKVGITDHA…YEAGWLFTVR (83 aa)) folds into the Lipoyl-binding domain. Lysine 66 bears the N6-lipoyllysine mark.

This sequence belongs to the GcvH family. As to quaternary structure, the glycine cleavage system is composed of four proteins: P, T, L and H. (R)-lipoate serves as cofactor.

Functionally, the glycine cleavage system catalyzes the degradation of glycine. The H protein shuttles the methylamine group of glycine from the P protein to the T protein. The chain is Glycine cleavage system H protein from Kocuria rhizophila (strain ATCC 9341 / DSM 348 / NBRC 103217 / DC2201).